The following is a 316-amino-acid chain: 4-hydroxy-3-methylbut-2-enyl diphosphate reductase (316 aa).

Cys12 is a binding site for [4Fe-4S] cluster. The (2E)-4-hydroxy-3-methylbut-2-enyl diphosphate site is built by His41 and His74. Dimethylallyl diphosphate is bound by residues His41 and His74. Isopentenyl diphosphate is bound by residues His41 and His74. Cys96 provides a ligand contact to [4Fe-4S] cluster. His124 contributes to the (2E)-4-hydroxy-3-methylbut-2-enyl diphosphate binding site. His124 contributes to the dimethylallyl diphosphate binding site. His124 is a binding site for isopentenyl diphosphate. The active-site Proton donor is Glu126. Thr167 serves as a coordination point for (2E)-4-hydroxy-3-methylbut-2-enyl diphosphate. Cys197 contributes to the [4Fe-4S] cluster binding site. The (2E)-4-hydroxy-3-methylbut-2-enyl diphosphate site is built by Ser225, Ser226, Asn227, and Ser269. Dimethylallyl diphosphate-binding residues include Ser225, Ser226, Asn227, and Ser269. Isopentenyl diphosphate-binding residues include Ser225, Ser226, Asn227, and Ser269.

Belongs to the IspH family. In terms of assembly, homodimer. [4Fe-4S] cluster serves as cofactor.

It catalyses the reaction isopentenyl diphosphate + 2 oxidized [2Fe-2S]-[ferredoxin] + H2O = (2E)-4-hydroxy-3-methylbut-2-enyl diphosphate + 2 reduced [2Fe-2S]-[ferredoxin] + 2 H(+). It carries out the reaction dimethylallyl diphosphate + 2 oxidized [2Fe-2S]-[ferredoxin] + H2O = (2E)-4-hydroxy-3-methylbut-2-enyl diphosphate + 2 reduced [2Fe-2S]-[ferredoxin] + 2 H(+). It functions in the pathway isoprenoid biosynthesis; dimethylallyl diphosphate biosynthesis; dimethylallyl diphosphate from (2E)-4-hydroxy-3-methylbutenyl diphosphate: step 1/1. It participates in isoprenoid biosynthesis; isopentenyl diphosphate biosynthesis via DXP pathway; isopentenyl diphosphate from 1-deoxy-D-xylulose 5-phosphate: step 6/6. Its function is as follows. Catalyzes the conversion of 1-hydroxy-2-methyl-2-(E)-butenyl 4-diphosphate (HMBPP) into a mixture of isopentenyl diphosphate (IPP) and dimethylallyl diphosphate (DMAPP). Acts in the terminal step of the DOXP/MEP pathway for isoprenoid precursor biosynthesis. The polypeptide is 4-hydroxy-3-methylbut-2-enyl diphosphate reductase (Sodalis glossinidius (strain morsitans)).